The following is a 59-amino-acid chain: uncharacterized protein (59 aa).

ATP is bound at residue 33–40 (GRRRVGKT).

This is an uncharacterized protein from Methanocaldococcus jannaschii (strain ATCC 43067 / DSM 2661 / JAL-1 / JCM 10045 / NBRC 100440) (Methanococcus jannaschii).